The chain runs to 323 residues: G patch domain-containing protein 4 (323 aa).

Disordered regions lie at residues 1 to 32 (MSAS…GLGR), 84 to 110 (GVKV…SNRN), 124 to 185 (PGGE…SAKL), and 197 to 323 (AKYG…NKSE). Composition is skewed to basic and acidic residues over residues 9–32 (SQGR…GLGR) and 84–94 (GVKVNRTKDDD). The region spanning 11-57 (GRRFAEQQMHKHGWTEGKGLGRRENGISEAIKVKVKCDHAGVGHNSA) is the G-patch domain. Low complexity predominate over residues 131 to 141 (KEPSSSESSDS). Acidic residues predominate over residues 252–261 (EREEEEEEES). Residues 281 to 291 (SKKKKSKKKHR) are compositionally biased toward basic residues. Positions 294-306 (SASPQEEQVTEST) are enriched in polar residues. A compositionally biased stretch (basic residues) spans 311–323 (KPKKKKKKKNKSE).

In Xenopus tropicalis (Western clawed frog), this protein is G patch domain-containing protein 4 (gpatch4).